Here is a 481-residue protein sequence, read N- to C-terminus: Zygotic gap protein knirps (481 aa).

Residues 2 to 78 (NQTCKVCGEP…VGMSKGGSRY (77 aa)) constitute a DNA-binding region (nuclear receptor). NR C4-type zinc fingers lie at residues 5–25 (CKVCGEPAAGFHFGAFTCEGC) and 42–66 (CKNDGKCIIDKKNRTTCKACRLRKC). 5 stretches are compositionally biased toward low complexity: residues 100-111 (AAAGKAPGHATG), 127-148 (QQQQQQHQQQQQQQHQHQQQQQ), 245-264 (TPPTVATVPQQSQPQPAASP), 316-335 (SHSSSASPTPSKSQSSSPLS), and 420-440 (TTNSCSSSTSTSSSNSSTSST). Disordered stretches follow at residues 100–161 (AAAG…GYTG), 231–294 (SVDS…PHTI), 308–336 (LLPGLTTASHSSSASPTPSKSQSSSPLSF), and 420–442 (TTNSCSSSTSTSSSNSSTSSTEA).

It belongs to the nuclear hormone receptor family. NR0 subfamily.

The protein localises to the nucleus. Its function is as follows. Transcriptional repressor. Binds to multiple sites in the eve stripe 3 enhancer element. Plays an essential role in the segmentation process both by refining the expression patterns of gap genes and by establishing pair-rules stripes of gene expression. The protein is Zygotic gap protein knirps (kni) of Drosophila virilis (Fruit fly).